Consider the following 858-residue polypeptide: Protein translocase subunit SecA (858 aa).

Residues Gln-88, 106–110, and Asp-494 contribute to the ATP site; that span reads GEGKT. The tract at residues 808-848 is disordered; it reads KEDRGQLSYSGGGNAEDARNTPAKAAPRIGRNDPCPCGSGR. Zn(2+) contacts are provided by Cys-842, Cys-844, Cys-853, and Cys-854.

Belongs to the SecA family. In terms of assembly, monomer and homodimer. Part of the essential Sec protein translocation apparatus which comprises SecA, SecYEG and auxiliary proteins SecDF-YajC and YidC. Zn(2+) serves as cofactor.

The protein resides in the cell inner membrane. Its subcellular location is the cytoplasm. It catalyses the reaction ATP + H2O + cellular proteinSide 1 = ADP + phosphate + cellular proteinSide 2.. Its function is as follows. Part of the Sec protein translocase complex. Interacts with the SecYEG preprotein conducting channel. Has a central role in coupling the hydrolysis of ATP to the transfer of proteins into and across the cell membrane, serving as an ATP-driven molecular motor driving the stepwise translocation of polypeptide chains across the membrane. The chain is Protein translocase subunit SecA from Desulfovibrio desulfuricans (strain ATCC 27774 / DSM 6949 / MB).